A 166-amino-acid chain; its full sequence is Putative 4-hydroxy-4-methyl-2-oxoglutarate aldolase 1 (166 aa).

A2 carries the N-acetylalanine modification. Residues 81 to 84 and R103 each bind substrate; that span reads GGNP. Residue D104 participates in a divalent metal cation binding.

Belongs to the class II aldolase/RraA-like family. As to quaternary structure, homotrimer. It depends on a divalent metal cation as a cofactor.

It catalyses the reaction 4-hydroxy-4-methyl-2-oxoglutarate = 2 pyruvate. The catalysed reaction is oxaloacetate + H(+) = pyruvate + CO2. Catalyzes the aldol cleavage of 4-hydroxy-4-methyl-2-oxoglutarate (HMG) into 2 molecules of pyruvate. Also contains a secondary oxaloacetate (OAA) decarboxylase activity due to the common pyruvate enolate transition state formed following C-C bond cleavage in the retro-aldol and decarboxylation reactions. The sequence is that of Putative 4-hydroxy-4-methyl-2-oxoglutarate aldolase 1 from Arabidopsis thaliana (Mouse-ear cress).